A 74-amino-acid polypeptide reads, in one-letter code: Putative defensin-like protein 12 (74 aa).

The N-terminal stretch at methionine 1–cysteine 26 is a signal peptide. Intrachain disulfides connect cysteine 26/cysteine 50, cysteine 33/cysteine 59, and cysteine 39/cysteine 61.

This sequence belongs to the DEFL family.

The protein localises to the secreted. The protein is Putative defensin-like protein 12 of Arabidopsis thaliana (Mouse-ear cress).